Consider the following 566-residue polypeptide: Proline--tRNA ligase (566 aa).

This sequence belongs to the class-II aminoacyl-tRNA synthetase family. ProS type 1 subfamily. Homodimer.

The protein resides in the cytoplasm. It carries out the reaction tRNA(Pro) + L-proline + ATP = L-prolyl-tRNA(Pro) + AMP + diphosphate. In terms of biological role, catalyzes the attachment of proline to tRNA(Pro) in a two-step reaction: proline is first activated by ATP to form Pro-AMP and then transferred to the acceptor end of tRNA(Pro). As ProRS can inadvertently accommodate and process non-cognate amino acids such as alanine and cysteine, to avoid such errors it has two additional distinct editing activities against alanine. One activity is designated as 'pretransfer' editing and involves the tRNA(Pro)-independent hydrolysis of activated Ala-AMP. The other activity is designated 'posttransfer' editing and involves deacylation of mischarged Ala-tRNA(Pro). The misacylated Cys-tRNA(Pro) is not edited by ProRS. In Bacillus cereus (strain G9842), this protein is Proline--tRNA ligase.